Consider the following 1013-residue polypeptide: Tolloid-like protein 1 (1013 aa).

A signal peptide spans 1 to 30 (MGLQALSPRMLLWLVVSGIVFSRVLWVCAG). Residues 31 to 147 (LDYDYTFDGN…EQSEKNRVPR (117 aa)) constitute a propeptide that is removed on maturation. Residues 124–150 (QNNTMKGKAPPKLSEQSEKNRVPRAAT) form a disordered region. The region spanning 148–347 (AATSRTERIW…AQARKLYRCP (200 aa)) is the Peptidase M12A domain. Asn-169 carries an N-linked (GlcNAc...) asparagine glycan. 4 disulfides stabilise this stretch: Cys-190/Cys-346, Cys-210/Cys-232, Cys-212/Cys-213, and Cys-349/Cys-375. Residue His-240 coordinates Zn(2+). The active site involves Glu-241. His-244 and His-250 together coordinate Zn(2+). CUB domains follow at residues 349-461 (CGET…YEAI) and 462-574 (CGGE…FFKE). N-linked (GlcNAc...) asparagine glycosylation is found at Asn-359 and Asn-390. Intrachain disulfides connect Cys-402-Cys-424, Cys-462-Cys-488, Cys-515-Cys-537, Cys-578-Cys-590, Cys-586-Cys-599, Cys-601-Cys-614, Cys-618-Cys-644, Cys-671-Cys-693, Cys-734-Cys-745, Cys-741-Cys-754, Cys-756-Cys-769, Cys-774-Cys-800, Cys-827-Cys-849, Cys-887-Cys-917, and Cys-944-Cys-966. Positions 574–615 (EEDECAKPDRGGCEQRCLNTLGSYQCACEPGYELGPDRRSCE) constitute an EGF-like 1; calcium-binding domain. The CUB 3 domain maps to 618–730 (CGGLLTKLNG…KGFKAHFFSD (113 aa)). Asn-626 carries an N-linked (GlcNAc...) asparagine glycan. Residues 730 to 770 (DKDECSKDNGGCQHECVNTMGSYTCQCRNGFVLHENKHDCK) enclose the EGF-like 2; calcium-binding domain. 2 consecutive CUB domains span residues 774–886 (CEQK…HSTE) and 887–1003 (CGGR…YKSI).

The cofactor is Zn(2+). As to expression, highly expressed in brain and kidney and weakly in lung, skeletal muscle. A perceptible level of expression is observed in heart and testis.

Its subcellular location is the secreted. In terms of biological role, protease which processes procollagen C-propeptides, such as chordin, pro-biglycan and pro-lysyl oxidase. Required for the embryonic development, especially heart development. Predominant protease, which in the development, influences dorsal-ventral patterning and skeletogenesis. The sequence is that of Tolloid-like protein 1 (Tll1) from Mus musculus (Mouse).